A 433-amino-acid chain; its full sequence is Glutamate--tRNA ligase 1 (433 aa).

Residues 7–17 carry the 'HIGH' region motif; that stretch reads PSPTGLIHLGN. The 'KMSKS' region signature appears at 230–234; sequence KMSKR. Residue lysine 233 coordinates ATP.

The protein belongs to the class-I aminoacyl-tRNA synthetase family. Glutamate--tRNA ligase type 1 subfamily. In terms of assembly, monomer.

It localises to the cytoplasm. It carries out the reaction tRNA(Glu) + L-glutamate + ATP = L-glutamyl-tRNA(Glu) + AMP + diphosphate. Catalyzes the attachment of glutamate to tRNA(Glu) in a two-step reaction: glutamate is first activated by ATP to form Glu-AMP and then transferred to the acceptor end of tRNA(Glu). In Neorickettsia sennetsu (strain ATCC VR-367 / Miyayama) (Ehrlichia sennetsu), this protein is Glutamate--tRNA ligase 1.